Here is a 499-residue protein sequence, read N- to C-terminus: ADP,ATP carrier protein 5 (499 aa).

11 helical membrane passes run 25–45 (LGKF…QNVL), 61–81 (IAGF…VIIY), 93–113 (IFYY…FVIY), 148–168 (YIVY…LLFW), 183–203 (FYTL…FLMM), 223–243 (ITLV…CCLL), 286–306 (LWLL…VEAV), 327–347 (LYIL…NNIM), 356–376 (AVIS…LIVF), 380–400 (ILSL…VSIG), and 468–488 (LISP…IYAV).

This sequence belongs to the ADP/ATP translocase tlc family.

It is found in the cell membrane. Functionally, provides the rickettsial cell with host ATP in exchange for rickettsial ADP. This is an obligate exchange system. This energy acquiring activity is an important component of rickettsial parasitism. The protein is ADP,ATP carrier protein 5 (tlcE) of Rickettsia conorii (strain ATCC VR-613 / Malish 7).